The chain runs to 152 residues: Nucleoside diphosphate kinase A 1 (152 aa).

ATP contacts are provided by Lys12, Phe60, Arg88, Thr94, Arg105, and Asn115. The active-site Pros-phosphohistidine intermediate is His118.

It belongs to the NDK family. Homohexamer. Requires Mg(2+) as cofactor. Post-translationally, the N-terminus is blocked.

Its subcellular location is the cytoplasm. It localises to the cell membrane. It is found in the nucleus. It catalyses the reaction a 2'-deoxyribonucleoside 5'-diphosphate + ATP = a 2'-deoxyribonucleoside 5'-triphosphate + ADP. The catalysed reaction is a ribonucleoside 5'-diphosphate + ATP = a ribonucleoside 5'-triphosphate + ADP. With respect to regulation, autophosphorylation at His-118 increases serine/threonine protein kinase activity of the enzyme. Interaction with the SET complex inhibits exonuclease activity. Major role in the synthesis of nucleoside triphosphates other than ATP. Possesses nucleoside-diphosphate kinase, serine/threonine-specific protein kinase, geranyl and farnesyl pyrophosphate kinase, histidine protein kinase and 3'-5' exonuclease activities. Involved in cell proliferation, differentiation and development, signal transduction, G protein-coupled receptor endocytosis, and gene expression. Required for neural development including neural patterning and cell fate determination. The sequence is that of Nucleoside diphosphate kinase A 1 (NME1-1) from Bos taurus (Bovine).